The following is a 352-amino-acid chain: Dysbindin (352 aa).

The residue at position 11 (S11) is a Phosphoserine. A coiled-coil region spans residues 92–180 (TSLAELQEQL…AELDTEHAQK (89 aa)). The short motif at 243–256 (LMDLSDQEALDVFL) is the Nuclear export signal element. Residues 267–352 (SPGLEMESNP…SDQCDSTQDI (86 aa)) form a disordered region. Over residues 274 to 285 (SNPSQNEMNLQI) the composition is skewed to polar residues. Low complexity predominate over residues 286 to 301 (PNPSESASQPPASPSA). 2 positions are modified to phosphoserine: S340 and S343.

Belongs to the dysbindin family. In terms of assembly, interacts (via its coiled coil domain) with KXD1. Interacts with AP3B2, TRIM32, CMYA5, PI4K2 and RNF151. Interacts with the DNA-dependent protein kinase complex DNA-PK; the interaction phosphorylates DTNBP1 in vitro. Interacts directly in this complex with XRCC5 and XRCC6. Interacts with XPO1; the interaction exports DTNBP1 out of the nucleus. Component of the biogenesis of lysosome-related organelles complex 1 (BLOC-1) composed of at least BLOC1S1, BLOC1S2, BLOC1S3, BLOC1S4, BLOC1S5, BLOC1S6, DTNBP1/BLOC1S7 and SNAPIN/BLOC1S8. Interacts directly in the complex with BLOC1S5, BLOC1S6 and SNAPIN/BLOC1S8. The BLOC-1 complex associates with the AP-3 protein complex and membrane protein cargos. This BLOC-1 complex also associates with the BLOC-2 complex in endosomes. Binds to DTNA and DTNB but may not be a physiological binding partner. Interacts with AP3M1. In terms of processing, ubiquitinated by TRIM32. Ubiquitination leads to DTNBP1 degradation. As to expression, detected in hippocampus neurons (at protein level). Ubiquitously expressed. The highest expression is observed in testis, liver, kidney, brain, heart and lung. In the brain, found primarily in axon bundles and axon terminals, notably in the cerebellum and hippocampus. Expressed at lower levels in stomach, small intestine and skeletal muscle, where it is detected at the sarcolemma.

Its subcellular location is the cytoplasm. It is found in the cytoplasmic vesicle membrane. The protein localises to the cytoplasmic vesicle. It localises to the secretory vesicle. The protein resides in the synaptic vesicle membrane. Its subcellular location is the endosome membrane. It is found in the melanosome membrane. The protein localises to the nucleus. It localises to the postsynaptic density. The protein resides in the presynaptic cell membrane. Its subcellular location is the endoplasmic reticulum. Functionally, component of the BLOC-1 complex, a complex that is required for normal biogenesis of lysosome-related organelles (LRO), such as platelet dense granules and melanosomes. In concert with the AP-3 complex, the BLOC-1 complex is required to target membrane protein cargos into vesicles assembled at cell bodies for delivery into neurites and nerve terminals. The BLOC-1 complex, in association with SNARE proteins, is also proposed to be involved in neurite extension. Associates with the BLOC-2 complex to facilitate the transport of TYRP1 independent of AP-3 function. Plays a role in synaptic vesicle trafficking and in neurotransmitter release. Plays a role in the regulation of cell surface exposure of DRD2. May play a role in actin cytoskeleton reorganization and neurite outgrowth. May modulate MAPK8 phosphorylation. Appears to promote neuronal transmission and viability through regulating the expression of SNAP25 and SYN1, modulating PI3-kinase-Akt signaling and influencing glutamatergic release. Regulates the expression of SYN1 through binding to its promoter. Modulates prefrontal cortical activity via the dopamine/D2 pathway. This chain is Dysbindin (Dtnbp1), found in Rattus norvegicus (Rat).